The following is a 117-amino-acid chain: Peptidyl-tRNA hydrolase (117 aa).

This sequence belongs to the PTH2 family.

It localises to the cytoplasm. It carries out the reaction an N-acyl-L-alpha-aminoacyl-tRNA + H2O = an N-acyl-L-amino acid + a tRNA + H(+). The natural substrate for this enzyme may be peptidyl-tRNAs which drop off the ribosome during protein synthesis. This is Peptidyl-tRNA hydrolase from Metallosphaera sedula (strain ATCC 51363 / DSM 5348 / JCM 9185 / NBRC 15509 / TH2).